A 606-amino-acid chain; its full sequence is Glutamine--fructose-6-phosphate aminotransferase [isomerizing] (606 aa).

C2 serves as the catalytic Nucleophile; for GATase activity. One can recognise a Glutamine amidotransferase type-2 domain in the interval 2 to 217; sequence CGIVGMVGEN…DGDVMVLRKD (216 aa). SIS domains follow at residues 284-423 and 455-596; these read YEEL…INGY and LSEK…PDKP. Catalysis depends on K601, which acts as the For Fru-6P isomerization activity.

Homodimer.

The protein localises to the cytoplasm. It catalyses the reaction D-fructose 6-phosphate + L-glutamine = D-glucosamine 6-phosphate + L-glutamate. Functionally, catalyzes the first step in hexosamine metabolism, converting fructose-6P into glucosamine-6P using glutamine as a nitrogen source. The chain is Glutamine--fructose-6-phosphate aminotransferase [isomerizing] from Thermotoga maritima (strain ATCC 43589 / DSM 3109 / JCM 10099 / NBRC 100826 / MSB8).